We begin with the raw amino-acid sequence, 427 residues long: 3-phosphoshikimate 1-carboxyvinyltransferase (427 aa).

Lysine 22, serine 23, and arginine 27 together coordinate 3-phosphoshikimate. Residue lysine 22 coordinates phosphoenolpyruvate. Phosphoenolpyruvate-binding residues include glycine 96 and arginine 124. The 3-phosphoshikimate site is built by serine 169, serine 170, glutamine 171, serine 197, aspartate 313, asparagine 336, and lysine 340. Glutamine 171 serves as a coordination point for phosphoenolpyruvate. Catalysis depends on aspartate 313, which acts as the Proton acceptor. The phosphoenolpyruvate site is built by arginine 344, arginine 386, and lysine 411.

Belongs to the EPSP synthase family. Monomer.

The protein resides in the cytoplasm. It catalyses the reaction 3-phosphoshikimate + phosphoenolpyruvate = 5-O-(1-carboxyvinyl)-3-phosphoshikimate + phosphate. Its pathway is metabolic intermediate biosynthesis; chorismate biosynthesis; chorismate from D-erythrose 4-phosphate and phosphoenolpyruvate: step 6/7. Catalyzes the transfer of the enolpyruvyl moiety of phosphoenolpyruvate (PEP) to the 5-hydroxyl of shikimate-3-phosphate (S3P) to produce enolpyruvyl shikimate-3-phosphate and inorganic phosphate. The sequence is that of 3-phosphoshikimate 1-carboxyvinyltransferase from Salmonella schwarzengrund (strain CVM19633).